The primary structure comprises 859 residues: Protein SEY1 (859 aa).

The Cytoplasmic portion of the chain corresponds to 1-742; sequence MMMNSHFAGV…KRSAIGGITQ (742 aa). The region spanning 49 to 291 is the GB1/RHD3-type G domain; that stretch reads GFNYHLISVF…FQPQYHRRIP (243 aa). 59-66 provides a ligand contact to GTP; sequence GSQSTGKS. Positions 476-496 form a coiled coil; that stretch reads FEHELKVYRKDLDDVSGRLRK. Residues 525–544 form a disordered region; that stretch reads LGTGRGGSGAPEHGERPPSE. A helical transmembrane segment spans residues 743–763; sequence VPLYFYGLLVALGWNEIVAVL. The Lumenal segment spans residues 764–766; the sequence is RNP. The helical transmembrane segment at 767–787 threads the bilayer; it reads VYFIFLILCAVGAYVTYTLNL. The Cytoplasmic portion of the chain corresponds to 788 to 859; sequence WGPMIRMGNA…DAEVEDLDDI (72 aa). The tract at residues 816–859 is disordered; that stretch reads SSESGRQAMAMSGNQPRGESVRMNRLNGNGKKDEDAEVEDLDDI. Residues 850 to 859 are compositionally biased toward acidic residues; the sequence is DAEVEDLDDI.

It belongs to the TRAFAC class dynamin-like GTPase superfamily. GB1/RHD3 GTPase family. RHD3 subfamily.

The protein resides in the endoplasmic reticulum membrane. Cooperates with the reticulon proteins and tubule-shaping DP1 family proteins to generate and maintain the structure of the tubular endoplasmic reticulum network. Has GTPase activity, which is required for its function in ER organization. This is Protein SEY1 from Phaeosphaeria nodorum (strain SN15 / ATCC MYA-4574 / FGSC 10173) (Glume blotch fungus).